We begin with the raw amino-acid sequence, 388 residues long: Succinate--CoA ligase [ADP-forming] subunit beta (388 aa).

Residues K46, 53–55, E99, C102, and E107 each bind ATP; that span reads GRG. Mg(2+) contacts are provided by N199 and D213. Residues N264 and 321–323 contribute to the substrate site; that span reads GIV.

This sequence belongs to the succinate/malate CoA ligase beta subunit family. Heterotetramer of two alpha and two beta subunits. Mg(2+) is required as a cofactor.

It carries out the reaction succinate + ATP + CoA = succinyl-CoA + ADP + phosphate. It catalyses the reaction GTP + succinate + CoA = succinyl-CoA + GDP + phosphate. Its pathway is carbohydrate metabolism; tricarboxylic acid cycle; succinate from succinyl-CoA (ligase route): step 1/1. Functionally, succinyl-CoA synthetase functions in the citric acid cycle (TCA), coupling the hydrolysis of succinyl-CoA to the synthesis of either ATP or GTP and thus represents the only step of substrate-level phosphorylation in the TCA. The beta subunit provides nucleotide specificity of the enzyme and binds the substrate succinate, while the binding sites for coenzyme A and phosphate are found in the alpha subunit. The sequence is that of Succinate--CoA ligase [ADP-forming] subunit beta from Actinobacillus pleuropneumoniae serotype 7 (strain AP76).